Here is a 1016-residue protein sequence, read N- to C-terminus: Mastermind-like protein 1 (1016 aa).

A required for interaction with NOTCH proteins region spans residues 1–123; it reads MVLPTCPMAE…NLDSATSPQN (123 aa). Serine 45 carries the phosphoserine modification. Disordered regions lie at residues 65–184, 263–487, 561–617, 658–681, and 796–953; these read QAKA…LGLD, PDED…PSHV, KPKP…SQQQ, EKQQ…QGSF, and AYGQ…GGRA. Basic residues predominate over residues 67-76; it reads KAKRAGKHRQ. The segment covering 93–115 has biased composition (basic and acidic residues); the sequence is DAADGPEHGRPATHLHDTVKRNL. The segment covering 116 to 129 has biased composition (polar residues); that stretch reads DSATSPQNGDQQNG. Residue serine 120 is modified to Phosphoserine. Residues 263–282 show a composition bias toward basic and acidic residues; it reads PDEDMKDLFNEDFEEKKDPE. A compositionally biased stretch (polar residues) spans 283–292; that stretch reads SSGSATQTPL. Residues serine 303 and serine 314 each carry the phosphoserine modification. The span at 322-353 shows a compositional bias: polar residues; the sequence is AGQTFLGPSSAPVSTDSPSLGGSQTLFHTSGQ. A Phosphoserine modification is found at serine 360. The segment covering 392-403 has biased composition (polar residues); the sequence is ELSSAHQLQQIA. The span at 413-426 shows a compositional bias: low complexity; that stretch reads QNPQQATPAPAPGQ. Composition is skewed to polar residues over residues 427–439, 451–463, 577–595, and 602–617; these read MSTW…SHSS, SPSS…TNSK, QEQN…SVGT, and VASS…SQQQ. Residues 801 to 810 show a composition bias toward low complexity; the sequence is SLGSSGLSQQ. N6-acetyllysine is present on lysine 822. Over residues 834 to 885 the composition is skewed to polar residues; that stretch reads GQNSSWQHQGMPNLSGQTPGNSNVSPFTAASSFHMQQQAHLKMSSPQFSQAV. Serine 1015 carries the phosphoserine modification.

It belongs to the mastermind family. As to quaternary structure, interacts (via N-terminus) with NOTCH1, NOTCH2, NOTCH3 and NOTCH4 (via ankyrin repeat region). Interacts (via N-terminus) with p53 (via DNA-binding region). Forms a DNA-binding complex with Notch proteins and RBPSUH/RBP-J kappa/CBF1. Also binds CREBBP/CBP and CDK8. Forms a complex with PRAG1, NOTCH1 and MAML1, in a MAML1-dependent manner. Widely expressed with highest levels in heart, pancreas, peripheral blood leukocytes and spleen.

It is found in the nucleus speckle. Its function is as follows. Acts as a transcriptional coactivator for NOTCH proteins. Has been shown to amplify NOTCH-induced transcription of HES1. Enhances phosphorylation and proteolytic turnover of the NOTCH intracellular domain in the nucleus through interaction with CDK8. Binds to CREBBP/CBP which promotes nucleosome acetylation at NOTCH enhancers and activates transcription. Induces phosphorylation and localization of CREBBP to nuclear foci. Plays a role in hematopoietic development by regulating NOTCH-mediated lymphoid cell fate decisions. The chain is Mastermind-like protein 1 from Homo sapiens (Human).